Consider the following 995-residue polypeptide: DExH-box ATP-dependent RNA helicase DExH10 (995 aa).

The tract at residues 1–42 (MSAQMEEPETLGKRKESESSKLRSDETPTPEPRTKRRSLKRA) is disordered. Ser-2 bears the N-acetylserine mark. Basic and acidic residues predominate over residues 10–26 (TLGKRKESESSKLRSDE). Positions 90–246 (VACLERKESI…WICYLHKQPC (157 aa)) constitute a Helicase ATP-binding domain. 103–110 (AHTSAGKT) is a binding site for ATP. The DEIH box motif lies at 194–197 (DEIH). A disordered region spans residues 290 to 318 (DTFPKPKSNDGKKSANGKSGGRGAKGGGG). A compositionally biased stretch (gly residues) spans 307–318 (KSGGRGAKGGGG). In terms of domain architecture, Helicase C-terminal spans 323–524 (DVYKIVKMIM…LSYYTILNLL (202 aa)).

The protein belongs to the DExH box helicase family. SKI2 subfamily. In terms of tissue distribution, expressed in inflorescences, leaves, stems, and roots.

Its subcellular location is the nucleus. It is found in the nucleoplasm. It catalyses the reaction ATP + H2O = ADP + phosphate + H(+). Functionally, ATP-dependent RNA helicase that associates with the RNA exosome complex, with the cap binding complex (CBC) and with the NEXT-like complex. Involved in the degradation of a large number of non-coding nuclear exosome substrates such as snoRNA and miRNA precursors, incompletely spliced mRNAs, and spurious transcripts produced from pseudogenes and intergenic regions. Involved in the maintenance of homeotic B and C gene expression in the reproductive whorls. Regulates floral organ spacing and identity, probably through the regulation of protein synthesis or mRNA degradation. The polypeptide is DExH-box ATP-dependent RNA helicase DExH10 (Arabidopsis thaliana (Mouse-ear cress)).